Reading from the N-terminus, the 360-residue chain is uncharacterized protein (360 aa).

Positions 4–235 (LSLQHIQKIY…PANMFVAGFI (232 aa)) constitute an ABC transporter domain. An ATP-binding site is contributed by 37–44 (GPSGCGKS).

It belongs to the ABC transporter superfamily.

This is an uncharacterized protein from Escherichia coli O157:H7.